The chain runs to 138 residues: Large ribosomal subunit protein bL17 (138 aa).

This sequence belongs to the bacterial ribosomal protein bL17 family. As to quaternary structure, part of the 50S ribosomal subunit. Contacts protein L32.

The sequence is that of Large ribosomal subunit protein bL17 from Bradyrhizobium diazoefficiens (strain JCM 10833 / BCRC 13528 / IAM 13628 / NBRC 14792 / USDA 110).